A 359-amino-acid chain; its full sequence is Membrane-bound lytic murein transglycosylase C (359 aa).

Residues 1 to 16 (MKKYLALALIAPLLIS) form the signal peptide. A lipid anchor (N-palmitoyl cysteine) is attached at Cys17. Residue Cys17 is the site of S-diacylglycerol cysteine attachment.

Belongs to the transglycosylase Slt family.

The protein resides in the cell outer membrane. It catalyses the reaction Exolytic cleavage of the (1-&gt;4)-beta-glycosidic linkage between N-acetylmuramic acid (MurNAc) and N-acetylglucosamine (GlcNAc) residues in peptidoglycan, from either the reducing or the non-reducing ends of the peptidoglycan chains, with concomitant formation of a 1,6-anhydrobond in the MurNAc residue.. Functionally, murein-degrading enzyme. May play a role in recycling of muropeptides during cell elongation and/or cell division. The chain is Membrane-bound lytic murein transglycosylase C from Shigella dysenteriae serotype 1 (strain Sd197).